The sequence spans 490 residues: Pleckstrin homology domain-containing family O member 2 (490 aa).

Positions 18–119 constitute a PH domain; that stretch reads MVDKAGWIKK…WIKALNEGIN (102 aa). Serine 164 and serine 167 each carry phosphoserine. The disordered stretch occupies residues 173-402; that stretch reads LDLDVPDSGP…DLLGEGPRHP (230 aa). The segment covering 230-243 has biased composition (low complexity); the sequence is APTPVSASSEVSPE. The residue at position 232 (threonine 232) is a Phosphothreonine. Residues serine 235, serine 237, and serine 238 each carry the phosphoserine modification. The span at 244–257 shows a compositional bias: acidic residues; sequence SQEDSETPAEEDSG. Phosphoserine is present on serine 273. Residues 277-297 are compositionally biased toward low complexity; that stretch reads PSPQEAPAAESAEPSQAPCSE. 2 positions are modified to phosphothreonine: threonine 298 and threonine 311. Residues serine 390 and serine 468 each carry the phosphoserine modification. Residues 439–481 are a coiled coil; that stretch reads SAETLLSQAVEQLRQATQVLQEMRDLGELSQEAPGLREKRKEL.

In Homo sapiens (Human), this protein is Pleckstrin homology domain-containing family O member 2 (PLEKHO2).